The following is a 360-amino-acid chain: Histidinol-phosphate aminotransferase (360 aa).

Residue Lys-223 is modified to N6-(pyridoxal phosphate)lysine.

It belongs to the class-II pyridoxal-phosphate-dependent aminotransferase family. Histidinol-phosphate aminotransferase subfamily. Homodimer. Pyridoxal 5'-phosphate serves as cofactor.

It catalyses the reaction L-histidinol phosphate + 2-oxoglutarate = 3-(imidazol-4-yl)-2-oxopropyl phosphate + L-glutamate. It functions in the pathway amino-acid biosynthesis; L-histidine biosynthesis; L-histidine from 5-phospho-alpha-D-ribose 1-diphosphate: step 7/9. The protein is Histidinol-phosphate aminotransferase of Bacillus velezensis (strain DSM 23117 / BGSC 10A6 / LMG 26770 / FZB42) (Bacillus amyloliquefaciens subsp. plantarum).